Reading from the N-terminus, the 239-residue chain is Ribosomal RNA small subunit methyltransferase G (239 aa).

S-adenosyl-L-methionine contacts are provided by residues G77, F82, 128–129, and R146; that span reads AE. The segment at 216-239 is disordered; it reads KRRQTSKKYPRKPGTPNKSPLVES.

The protein belongs to the methyltransferase superfamily. RNA methyltransferase RsmG family.

The protein resides in the cytoplasm. Its function is as follows. Specifically methylates the N7 position of guanine in position 535 of 16S rRNA. This chain is Ribosomal RNA small subunit methyltransferase G, found in Staphylococcus epidermidis (strain ATCC 35984 / DSM 28319 / BCRC 17069 / CCUG 31568 / BM 3577 / RP62A).